A 161-amino-acid polypeptide reads, in one-letter code: ATP synthase subunit b 1 (161 aa).

A helical transmembrane segment spans residues 3–23; it reads LDATFYALVGLILFFVLIAYL.

Belongs to the ATPase B chain family. F-type ATPases have 2 components, F(1) - the catalytic core - and F(0) - the membrane proton channel. F(1) has five subunits: alpha(3), beta(3), gamma(1), delta(1), epsilon(1). F(0) has three main subunits: a(1), b(2) and c(10-14). The alpha and beta chains form an alternating ring which encloses part of the gamma chain. F(1) is attached to F(0) by a central stalk formed by the gamma and epsilon chains, while a peripheral stalk is formed by the delta and b chains.

Its subcellular location is the cell inner membrane. Functionally, f(1)F(0) ATP synthase produces ATP from ADP in the presence of a proton or sodium gradient. F-type ATPases consist of two structural domains, F(1) containing the extramembraneous catalytic core and F(0) containing the membrane proton channel, linked together by a central stalk and a peripheral stalk. During catalysis, ATP synthesis in the catalytic domain of F(1) is coupled via a rotary mechanism of the central stalk subunits to proton translocation. Its function is as follows. Component of the F(0) channel, it forms part of the peripheral stalk, linking F(1) to F(0). The protein is ATP synthase subunit b 1 of Rhizobium meliloti (strain 1021) (Ensifer meliloti).